Consider the following 697-residue polypeptide: Long-chain-fatty-acid--CoA ligase 6 (697 aa).

A helical; Signal-anchor for type III membrane protein transmembrane segment spans residues 25–45; that stretch reads LSATTLVSMGALAAILAYWFT. Over 46–697 the chain is Cytoplasmic; the sequence is HRPKALQPPC…QIEELYSISM (652 aa).

This sequence belongs to the ATP-dependent AMP-binding enzyme family. Mg(2+) serves as cofactor. Expressed predominantly in erythrocyte precursors, in particular in reticulocytes, fetal blood cells derived from fetal liver, hemopoietic stem cells from cord blood, bone marrow and brain.

It is found in the mitochondrion outer membrane. The protein localises to the peroxisome membrane. The protein resides in the microsome membrane. It localises to the endoplasmic reticulum membrane. It catalyses the reaction a long-chain fatty acid + ATP + CoA = a long-chain fatty acyl-CoA + AMP + diphosphate. The enzyme catalyses (5Z,8Z,11Z,14Z)-eicosatetraenoate + ATP + CoA = (5Z,8Z,11Z,14Z)-eicosatetraenoyl-CoA + AMP + diphosphate. The catalysed reaction is hexadecanoate + ATP + CoA = hexadecanoyl-CoA + AMP + diphosphate. It carries out the reaction (E)-hexadec-2-enoate + ATP + CoA = (2E)-hexadecenoyl-CoA + AMP + diphosphate. It catalyses the reaction 15-hydroxy-(5Z,8Z,11Z,13E)-eicosatetraenoate + ATP + CoA = 15-hydroxy-(5Z,8Z,11Z,13E)-eicosatetraenoyl-CoA + AMP + diphosphate. The enzyme catalyses 12-hydroxy-(5Z,8Z,10E,14Z)-eicosatetraenoate + ATP + CoA = 12-hydroxy-(5Z,8Z,10E,14Z)-eicosatetraenoyl-CoA + AMP + diphosphate. The catalysed reaction is 5-hydroxy-(6E,8Z,11Z,14Z)-eicosatetraenoate + ATP + CoA = 5-hydroxy-(6E,8Z,11Z,14Z)-eicosatetraenoyl-CoA + AMP + diphosphate. Catalyzes the conversion of long-chain fatty acids to their active form acyl-CoA for both synthesis of cellular lipids, and degradation via beta-oxidation. Plays an important role in fatty acid metabolism in brain and the acyl-CoAs produced may be utilized exclusively for the synthesis of the brain lipid. This Homo sapiens (Human) protein is Long-chain-fatty-acid--CoA ligase 6.